The following is a 1023-amino-acid chain: MCARMAGRTTAAPRGPYGPWLCLLVALALDVVRVDCGQAPLDPVYLPAALELLDAPEHFRVQQVGHYPPANSSLSSRSETFLLLQPWPRAQPLLRASYPPFATQQVVPPRVTEPHQRPVPWDVRAVSVEAAVTPAEPYARVLFHLKGQDWPPGSGSLPCARLHATHPAGTAHQACRFQPSLGACVVELELPSHWFSQASTTRAELAYTLEPAAEGPGGCGSGEENDPGEQALPVGGVELRPADPPQYQEVPLDEAVTLRVPDMPVRPGQLFSATLLLRHNFTASLLTLRIKVKKGLHVTAARPAQPTLWTAKLDRFKGSRHHTTLITCHRAGLTEPDSSPLELSEFLWVDFVVENSTGGGVAVTRPVTWQLEYPGQAPEAEKDKMVWEILVSERDIRALIPLAKAEELVNTAPLTGVPQHVPVRLVTVDGGGALVEVTEHVGCESANTQVLQVSEACDAVFVAGKESRGARGVRVDFWWRRLRASLRLTVWAPLLPLRIELTDTTLEQVRGWRVPGPAEGPAEPAAEASDEAERRARGCHLQYQRAGVRFLAPFAAHPLDGGRRLTHLLGPDWLLDVSHLVAPHARVLDSRVASLEGGRVVVGREPGVTSIEVRSPLSDSILGEQALAVTDDKVSVLELRVQPVMGISLTLSRGTAHPGEVTATCWAQSALPAPKQEVALSLWLSFSDHTVAPAELYDRRDLGLSVSAEEPGAILPAEEQGAQLGVVVSGAGAEGLPLHVALHPPEPCRRGRHRVPLASGTAWLGLPPASTPAPALPSSPAWSPPATEATMGGKRQVAGSVGGNTGVRGKFERAEEEARKEETEAREEEEEEEEEMVPAPQHVTELELGMYALLGVFCVAIFIFLVNGVVFVLRYQRKEPPDSATDPTSPQPHNWVWLGTDQEELSRQLDRQSPGPPKGEGSCPCESGGGGEAPTLAPGPPGGTTSSSSTLARKEAGGRRKRVEFVTFAPAPPAQSPEEPVGAPAVQSILVAGEEDIRWVCEDMGLKDPEELRNYMERIRGSS.

The N-terminal stretch at 1–35 (MCARMAGRTTAAPRGPYGPWLCLLVALALDVVRVD) is a signal peptide. At 36 to 852 (CGQAPLDPVY…VTELELGMYA (817 aa)) the chain is on the extracellular side. The segment at 212–246 (AAEGPGGCGSGEENDPGEQALPVGGVELRPADPPQ) is disordered. Asn-280 is a glycosylation site (N-linked (GlcNAc...) asparagine). Disordered stretches follow at residues 512-533 (WRVP…DEAE) and 766-839 (LPPA…MVPA). Residues 515 to 527 (PGPAEGPAEPAAE) show a composition bias toward low complexity. Ser-529 is subject to Phosphoserine; by FAM20C. Residues 611–916 (IEVRSPLSDS…RQLDRQSPGP (306 aa)) are binds to HSPA5/GRP78. Residues 671–1023 (LPAPKQEVAL…NYMERIRGSS (353 aa)) form a confers cellular localization similar to full-length form region. A compositionally biased stretch (low complexity) spans 778-790 (SSPAWSPPATEAT). Residues 809–823 (GKFERAEEEARKEET) are compositionally biased toward basic and acidic residues. Positions 824-836 (EAREEEEEEEEEM) are enriched in acidic residues. A helical membrane pass occupies residues 853–873 (LLGVFCVAIFIFLVNGVVFVL). Over 874 to 1023 (RYQRKEPPDS…NYMERIRGSS (150 aa)) the chain is Cytoplasmic. The interval 905-961 (LSRQLDRQSPGPPKGEGSCPCESGGGGEAPTLAPGPPGGTTSSSSTLARKEAGGRRK) is disordered.

The protein belongs to the TMEM132 family. As to quaternary structure, interacts with HSPA5/GRP78.

It localises to the golgi apparatus membrane. It is found in the endoplasmic reticulum membrane. Functionally, may play a role in embryonic and postnatal development of the brain. Increased resistance to cell death induced by serum starvation in cultured cells. Regulates cAMP-induced GFAP gene expression via STAT3 phosphorylation. The chain is Transmembrane protein 132A (TMEM132A) from Homo sapiens (Human).